Reading from the N-terminus, the 720-residue chain is Calpain-12 (720 aa).

The Calpain catalytic domain maps to 45 to 341 (LFRDPCFPAG…FNTVQICSLS (297 aa)). Active-site residues include cysteine 105, histidine 259, and asparagine 283. The segment at 342 to 541 (PEVLGPSPAG…DDVISADLDA (200 aa)) is domain III. Residues 393–403 (DEEEDDDDEEG) show a composition bias toward acidic residues. A disordered region spans residues 393-415 (DEEEDDDDEEGPWGGWGAAGARG). A domain IV region spans residues 542–720 (LQAPYKPLEL…KQWSEVATFS (179 aa)). Residues 621 to 656 (GHLMSWQATFDKFDEDASGTMNSCELRLALTAAGFH) enclose the EF-hand domain. Residues aspartate 634, aspartate 636, serine 638, threonine 640, and glutamate 645 each coordinate Ca(2+).

This sequence belongs to the peptidase C2 family. As to expression, expression localized to the cortex of the hair follicle during the anagen phase of hair cycle.

Calcium-regulated non-lysosomal thiol-protease. The polypeptide is Calpain-12 (Capn12) (Mus musculus (Mouse)).